A 335-amino-acid polypeptide reads, in one-letter code: Nonaprenyl diphosphate synthase (335 aa).

Residues lysine 57, arginine 60, and histidine 90 each contribute to the isopentenyl diphosphate site. The Mg(2+) site is built by aspartate 97 and aspartate 101. The DDXXD motif signature appears at 97-101; the sequence is DDVMD. Arginine 107 contributes to the isopentenyl diphosphate binding site. A DDXXD motif motif is present at residues 223–227; sequence DDIID.

This sequence belongs to the FPP/GGPP synthase family. Mg(2+) serves as cofactor.

It carries out the reaction isopentenyl diphosphate + (2E)-geranyl diphosphate = (2E,6E)-farnesyl diphosphate + diphosphate. The enzyme catalyses isopentenyl diphosphate + (2E,6E)-farnesyl diphosphate = (2E,6E,10E)-geranylgeranyl diphosphate + diphosphate. The catalysed reaction is 5 isopentenyl diphosphate + (2E,6E,10E)-geranylgeranyl diphosphate = all-trans-nonaprenyl diphosphate + 5 diphosphate. Its pathway is isoprenoid biosynthesis; farnesyl diphosphate biosynthesis; farnesyl diphosphate from geranyl diphosphate and isopentenyl diphosphate. The protein operates within isoprenoid biosynthesis; geranylgeranyl diphosphate biosynthesis; geranylgeranyl diphosphate from farnesyl diphosphate and isopentenyl diphosphate: step 1/1. Catalyzes the sequential condensations of isopentenyl pyrophosphate (IPP) with geranyl diphosphate (GPP) to yield (2E,6E)-farnesyl diphosphate (E,E-FPP), with E,E-FPP to yield geranylgeranyl diphosphate (GGPP) and with GGPP to yield nonaprenyl diphosphate. May also have weak activity with dimethylallyl diphosphate (DMAPP). This chain is Nonaprenyl diphosphate synthase, found in Mycobacterium tuberculosis (strain ATCC 25618 / H37Rv).